The sequence spans 474 residues: NAD(P) transhydrogenase subunit beta (474 aa).

Helical transmembrane passes span 4-24 (GLVQAAYILAALLFIMSLAGL), 46-66 (IATIFGPHSEGTFWIIIAMII), 83-103 (MPELVAILHSFVGLAAVLVGF), 132-152 (VLTNIHNVEVFLGIFIGAVTF), 181-200 (LAALVVSALLMVAFLNNPES), 202-222 (FPVLLMTAIALAFGWHLVASI), 229-249 (VVVSMLNSYSGWAAAAAGFIL), 253-273 (LLIVTGALVGSSGAILSYIMC), and 321-341 (VIITPGYGMAVAQAQYPVADI).

It belongs to the PNT beta subunit family. As to quaternary structure, heterodimer of an alpha and a beta chain.

It localises to the cell inner membrane. It catalyses the reaction NAD(+) + NADPH + H(+)(in) = NADH + NADP(+) + H(+)(out). Its function is as follows. The transhydrogenation between NADH and NADP is coupled to respiration and ATP hydrolysis and functions as a proton pump across the membrane. The chain is NAD(P) transhydrogenase subunit beta (pntB) from Haemophilus influenzae (strain ATCC 51907 / DSM 11121 / KW20 / Rd).